A 147-amino-acid polypeptide reads, in one-letter code: Large ribosomal subunit protein bL9 (147 aa).

It belongs to the bacterial ribosomal protein bL9 family.

Binds to the 23S rRNA. The protein is Large ribosomal subunit protein bL9 of Campylobacter jejuni subsp. jejuni serotype O:23/36 (strain 81-176).